The sequence spans 298 residues: Tyrosine recombinase XerC (298 aa).

Positions methionine 1–methionine 84 constitute a Core-binding (CB) domain. One can recognise a Tyr recombinase domain in the interval tyrosine 105–leucine 286. Catalysis depends on residues arginine 145, lysine 169, histidine 238, arginine 241, and histidine 264. Tyrosine 273 (O-(3'-phospho-DNA)-tyrosine intermediate) is an active-site residue.

The protein belongs to the 'phage' integrase family. XerC subfamily. As to quaternary structure, forms a cyclic heterotetrameric complex composed of two molecules of XerC and two molecules of XerD.

The protein localises to the cytoplasm. Site-specific tyrosine recombinase, which acts by catalyzing the cutting and rejoining of the recombining DNA molecules. The XerC-XerD complex is essential to convert dimers of the bacterial chromosome into monomers to permit their segregation at cell division. It also contributes to the segregational stability of plasmids. This chain is Tyrosine recombinase XerC, found in Staphylococcus aureus (strain MRSA252).